The chain runs to 124 residues: Small ribosomal subunit protein uS11 (124 aa).

Belongs to the universal ribosomal protein uS11 family. Part of the 30S ribosomal subunit. Interacts with proteins S7 and S18. Binds to IF-3.

In terms of biological role, located on the platform of the 30S subunit, it bridges several disparate RNA helices of the 16S rRNA. Forms part of the Shine-Dalgarno cleft in the 70S ribosome. The chain is Small ribosomal subunit protein uS11 from Sulfurovum sp. (strain NBC37-1).